Reading from the N-terminus, the 462-residue chain is MQEGKISQIIGPVVDVDFQEGGLPAILDALTVARPDGTKLVLETQQHLGEERVRTISMDATDGLVRGMPVINTGKPIQVPVGPNVLGRMLNVVGDPIDGKGPVKSEKSYSIHRPTPKFDVLSTKSEMFETGIKVIDLLEPYSRGGKTGLFGGAGVGKTVLIMELINNIAKQQSGFSVFAGVGERTREGNDLWEEMKESGVIDKTALVFGQMNEPPGARARVALTGLSIAEYFRDEENRDVLLFIDNIFRFTQAGSEVSALLGRMPSAVGYQPTLGTEMGELQDRIVSTNKGSVTSVQAIYVPADDLTDPAPATAFTHLDATTVLSRSIAELGIYPAVDPLDSTSRILDPNIVGDEHYNTAQAVKSLLQRYKDLQDIIAILGMDELSDEDKLTVSRARKIQRFLSQPFFVAEAFTGLEGKYVKLEDTIKGFNEIIDGKHDDLPESAFYLVGTIEEAVEKAKTL.

151–158 (GGAGVGKT) provides a ligand contact to ATP.

Belongs to the ATPase alpha/beta chains family. As to quaternary structure, F-type ATPases have 2 components, CF(1) - the catalytic core - and CF(0) - the membrane proton channel. CF(1) has five subunits: alpha(3), beta(3), gamma(1), delta(1), epsilon(1). CF(0) has four main subunits: a(1), b(1), b'(1) and c(9-12).

It is found in the cell inner membrane. It carries out the reaction ATP + H2O + 4 H(+)(in) = ADP + phosphate + 5 H(+)(out). In terms of biological role, produces ATP from ADP in the presence of a proton gradient across the membrane. The catalytic sites are hosted primarily by the beta subunits. The polypeptide is ATP synthase subunit beta (Chlorobium phaeobacteroides (strain BS1)).